We begin with the raw amino-acid sequence, 292 residues long: Cyclin-dependent kinase 5 (292 aa).

A Protein kinase domain is found at 4-286 (YEKLEKIGEG…AEEALQHPYF (283 aa)). ATP-binding positions include 10-18 (IGEGTYGTV) and Lys-33. Phosphotyrosine; by ABL1, EPHA4 and FYN is present on Tyr-15. The residue at position 17 (Thr-17) is a Phosphothreonine. The residue at position 56 (Lys-56) is an N6-acetyllysine. A Phosphoserine modification is found at Ser-72. Residue Asp-126 is the Proton acceptor of the active site. Ser-159 is modified (phosphoserine).

This sequence belongs to the protein kinase superfamily. CMGC Ser/Thr protein kinase family. CDC2/CDKX subfamily. Heterodimer composed of a catalytic subunit CDK5 and a regulatory subunit CDK5R1 (p25) and macromolecular complex composed of at least CDK5, CDK5R1 (p35) and CDK5RAP1 or CDK5RAP2 or CDK5RAP3. Only the heterodimer shows kinase activity. Under neurotoxic stress and neuronal injury conditions, p35 is cleaved by calpain to generate p25 that hyperactivates CDK5, that becomes functionally disabled and often toxic. Found in a trimolecular complex with CABLES1 and ABL1. Interacts with CABLES1 and CABLES2. Interacts with AATK and GSTP1. Binds to HDAC1 when in complex with p25. Interaction with myristoylation p35 promotes CDK5 association with membranes. Both isoforms 1 and 2 interacts with beta-catenin/CTNNB1. Interacts with delta-catenin/CTNND2 and APEX1. Interacts with P53/TP53 in neurons. Interacts with EPHA4; may mediate the activation of NGEF by EPHA4. Interacts with PTK2/FAK1. The complex p35/CDK5 interacts with CLOCK. Post-translationally, phosphorylation on Tyr-15 by ABL1 and FYN, and on Ser-159 by casein kinase 1 promotes kinase activity. By contrast, phosphorylation at Thr-14 inhibits activity. In terms of processing, phosphorylation at Ser-159 is essential for maximal catalytic activity.

It localises to the nucleus. It is found in the cytoplasm. The protein localises to the cell membrane. Its subcellular location is the perikaryon. The protein resides in the cell projection. It localises to the lamellipodium. It is found in the growth cone. The protein localises to the postsynaptic density. Its subcellular location is the synapse. The enzyme catalyses L-seryl-[protein] + ATP = O-phospho-L-seryl-[protein] + ADP + H(+). It catalyses the reaction L-threonyl-[protein] + ATP = O-phospho-L-threonyl-[protein] + ADP + H(+). Its activity is regulated as follows. Inhibited by 2-(1-ethyl-2-hydroxyethylamino)-6-benzylamino-9-isopropylpurine (roscovitine), 1-isopropyl-4-aminobenzyl-6-ether-linked benzimidazoles, resveratrol, AT-7519 and olomoucine. Activated by CDK5R1 (p35) and CDK5R2 (p39) during the development of the nervous system; degradation of CDK5R1 (p35) and CDK5R2 (p39) by proteasome result in down regulation of kinase activity, during this process, CDK5 phosphorylates p35 and induces its ubiquitination and subsequent degradation. Kinase activity is mainly determined by the amount of p35 available and subcellular location; reversible association to plasma membrane inhibits activity. Long-term inactivation as well as CDK5R1 (p25)-mediated hyperactivation of CDK5 triggers cell death. The pro-death activity of hyperactivated CDK5 is suppressed by membrane association of CDK5, via myristoylation of p35. Brain-derived neurotrophic factor, glial-derived neurotrophic factor, nerve growth factor (NGF), retinoic acid, laminin and neuregulin promote activity. Neurotoxicity enhances nuclear activity, thus leading to MEF2 phosphorylation and inhibition prior to apoptosis of cortical neurons. Repression by GSTP1 via p25/p35 translocation prevents neurodegeneration. Its function is as follows. Proline-directed serine/threonine-protein kinase essential for neuronal cell cycle arrest and differentiation and may be involved in apoptotic cell death in neuronal diseases by triggering abortive cell cycle re-entry. Interacts with D1 and D3-type G1 cyclins. Phosphorylates SRC, NOS3, VIM/vimentin, p35/CDK5R1, MEF2A, SIPA1L1, SH3GLB1, PXN, PAK1, MCAM/MUC18, SEPT5, SYN1, DNM1, AMPH, SYNJ1, CDK16, RAC1, RHOA, CDC42, TONEBP/NFAT5, MAPT/TAU, MAP1B, histone H1, p53/TP53, HDAC1, APEX1, PTK2/FAK1, huntingtin/HTT, ATM, MAP2, NEFH and NEFM. Regulates several neuronal development and physiological processes including neuronal survival, migration and differentiation, axonal and neurite growth, synaptogenesis, oligodendrocyte differentiation, synaptic plasticity and neurotransmission, by phosphorylating key proteins. Negatively regulates the CACNA1B/CAV2.2 -mediated Ca(2+) release probability at hippocampal neuronal soma and synaptic terminals. Activated by interaction with CDK5R1 (p35) and CDK5R2 (p39), especially in postmitotic neurons, and promotes CDK5R1 (p35) expression in an autostimulation loop. Phosphorylates many downstream substrates such as Rho and Ras family small GTPases (e.g. PAK1, RAC1, RHOA, CDC42) or microtubule-binding proteins (e.g. MAPT/TAU, MAP2, MAP1B), and modulates actin dynamics to regulate neurite growth and/or spine morphogenesis. Also phosphorylates exocytosis associated proteins such as MCAM/MUC18, SEPT5, SYN1, and CDK16/PCTAIRE1 as well as endocytosis associated proteins such as DNM1, AMPH and SYNJ1 at synaptic terminals. In the mature central nervous system (CNS), regulates neurotransmitter movements by phosphorylating substrates associated with neurotransmitter release and synapse plasticity; synaptic vesicle exocytosis, vesicles fusion with the presynaptic membrane, and endocytosis. Promotes cell survival by activating anti-apoptotic proteins BCL2 and STAT3, and negatively regulating of JNK3/MAPK10 activity. Phosphorylation of p53/TP53 in response to genotoxic and oxidative stresses enhances its stabilization by preventing ubiquitin ligase-mediated proteasomal degradation, and induces transactivation of p53/TP53 target genes, thus regulating apoptosis. Phosphorylation of p35/CDK5R1 enhances its stabilization by preventing calpain-mediated proteolysis producing p25/CDK5R1 and avoiding ubiquitin ligase-mediated proteasomal degradation. During aberrant cell-cycle activity and DNA damage, p25/CDK5 activity elicits cell-cycle activity and double-strand DNA breaks that precedes neuronal death by deregulating HDAC1. DNA damage triggered phosphorylation of huntingtin/HTT in nuclei of neurons protects neurons against polyglutamine expansion as well as DNA damage mediated toxicity. Phosphorylation of PXN reduces its interaction with PTK2/FAK1 in matrix-cell focal adhesions (MCFA) during oligodendrocytes (OLs) differentiation. Negative regulator of Wnt/beta-catenin signaling pathway. Activator of the GAIT (IFN-gamma-activated inhibitor of translation) pathway, which suppresses expression of a post-transcriptional regulon of proinflammatory genes in myeloid cells; phosphorylates the linker domain of glutamyl-prolyl tRNA synthetase (EPRS) in a IFN-gamma-dependent manner, the initial event in assembly of the GAIT complex. Phosphorylation of SH3GLB1 is required for autophagy induction in starved neurons. Phosphorylation of TONEBP/NFAT5 in response to osmotic stress mediates its rapid nuclear localization. MEF2 is inactivated by phosphorylation in nucleus in response to neurotoxin, thus leading to neuronal apoptosis. APEX1 AP-endodeoxyribonuclease is repressed by phosphorylation, resulting in accumulation of DNA damage and contributing to neuronal death. NOS3 phosphorylation down regulates NOS3-derived nitrite (NO) levels. SRC phosphorylation mediates its ubiquitin-dependent degradation and thus leads to cytoskeletal reorganization. May regulate endothelial cell migration and angiogenesis via the modulation of lamellipodia formation. Involved in dendritic spine morphogenesis by mediating the EFNA1-EPHA4 signaling. The complex p35/CDK5 participates in the regulation of the circadian clock by modulating the function of CLOCK protein: phosphorylates CLOCK at 'Thr-451' and 'Thr-461' and regulates the transcriptional activity of the CLOCK-BMAL1 heterodimer in association with altered stability and subcellular distribution. In Bos taurus (Bovine), this protein is Cyclin-dependent kinase 5.